Reading from the N-terminus, the 284-residue chain is L-ribulose-5-phosphate 3-epimerase UlaE (284 aa).

Belongs to the L-ribulose-5-phosphate 3-epimerase family.

It carries out the reaction L-ribulose 5-phosphate = L-xylulose 5-phosphate. It participates in cofactor degradation; L-ascorbate degradation; D-xylulose 5-phosphate from L-ascorbate: step 3/4. Its function is as follows. Catalyzes the isomerization of L-xylulose-5-phosphate to L-ribulose-5-phosphate. Is involved in the anaerobic L-ascorbate utilization. The protein is L-ribulose-5-phosphate 3-epimerase UlaE of Escherichia coli (strain 55989 / EAEC).